A 417-amino-acid polypeptide reads, in one-letter code: NADH-quinone oxidoreductase subunit D (417 aa).

This sequence belongs to the complex I 49 kDa subunit family. In terms of assembly, NDH-1 is composed of 14 different subunits. Subunits NuoB, C, D, E, F, and G constitute the peripheral sector of the complex.

It is found in the cell inner membrane. It carries out the reaction a quinone + NADH + 5 H(+)(in) = a quinol + NAD(+) + 4 H(+)(out). NDH-1 shuttles electrons from NADH, via FMN and iron-sulfur (Fe-S) centers, to quinones in the respiratory chain. The immediate electron acceptor for the enzyme in this species is believed to be ubiquinone. Couples the redox reaction to proton translocation (for every two electrons transferred, four hydrogen ions are translocated across the cytoplasmic membrane), and thus conserves the redox energy in a proton gradient. This Burkholderia orbicola (strain MC0-3) protein is NADH-quinone oxidoreductase subunit D.